A 639-amino-acid chain; its full sequence is Synaptotagmin-16 (639 aa).

Over residues 95 to 119 (NSDLQDSVQTASPTLGQQAEDSSSV) the composition is skewed to polar residues. Residues 95-191 (NSDLQDSVQT…SSESDEDVTK (97 aa)) form a disordered region. Over residues 121–134 (PPWPSKIPGAPKPQ) the composition is skewed to pro residues. A compositionally biased stretch (basic and acidic residues) spans 142–151 (EEDHHSERQR). A compositionally biased stretch (acidic residues) spans 174–187 (GDDEEPSTSSESDE). The C2 1 domain maps to 344 to 463 (KCGDLDVIFE…HPEGEMKVTL (120 aa)). The tract at residues 470 to 496 (NLSSGESPLSPSVVSHSDSASSTQSLS) is disordered. Residues 476 to 496 (SPLSPSVVSHSDSASSTQSLS) are compositionally biased toward low complexity. Residues 499 to 634 (GVPELLVGLS…SKGQQTCRWH (136 aa)) enclose the C2 2 domain.

This sequence belongs to the synaptotagmin family. Homodimer. Can also form heterodimers. Highly expressed in heart and testis. Moderately expressed in kidney.

Its function is as follows. May be involved in the trafficking and exocytosis of secretory vesicles in non-neuronal tissues. Is Ca(2+)-independent. This Mus musculus (Mouse) protein is Synaptotagmin-16 (Syt16).